The following is a 101-amino-acid chain: Large ribosomal subunit protein uL23 (101 aa).

This sequence belongs to the universal ribosomal protein uL23 family. As to quaternary structure, part of the 50S ribosomal subunit. Contacts protein L29, and trigger factor when it is bound to the ribosome.

Functionally, one of the early assembly proteins it binds 23S rRNA. One of the proteins that surrounds the polypeptide exit tunnel on the outside of the ribosome. Forms the main docking site for trigger factor binding to the ribosome. In Aromatoleum aromaticum (strain DSM 19018 / LMG 30748 / EbN1) (Azoarcus sp. (strain EbN1)), this protein is Large ribosomal subunit protein uL23.